The sequence spans 611 residues: Rop guanine nucleotide exchange factor 5 (611 aa).

The tract at residues 1 to 62 (MENLVKSCAG…PPPPPSQILG (62 aa)) is disordered. The segment covering 34–51 (STSGASYESSSTTTVASS) has biased composition (low complexity). Residues 93-477 (FKAKEMNSAD…DLTKQSDDNN (385 aa)) enclose the PRONE domain. Disordered regions lie at residues 513 to 541 (TTPGFSPSMISPKKGERRTPYSSKDTNKI) and 588 to 611 (DVEEEKKRNSTSVHQKGPPKYTVS). Over residues 525-541 (KKGERRTPYSSKDTNKI) the composition is skewed to basic and acidic residues.

Guanine-nucleotide exchange factor (GEF) that acts as an activator of Rop (Rho of plants) GTPases by promoting the exchange of GDP for GTP. The chain is Rop guanine nucleotide exchange factor 5 (ROPGEF5) from Arabidopsis thaliana (Mouse-ear cress).